The following is a 352-amino-acid chain: Minor capsid protein VP2 (352 aa).

A lipid anchor (N-myristoyl glycine; by host) is attached at Gly-2. The tract at residues 273 to 308 (SGEFIEKFEAPGGANQRTAPQWMLPLLLGLYGSVTS) is D1. Residues 290–310 (TAPQWMLPLLLGLYGSVTSAL) form a helical membrane-spanning segment. The disordered stretch occupies residues 313–352 (YEDGPNKKKRKLSRGSSQKTKGTSASAKARHKRRNRSSRS). The interval 313–352 (YEDGPNKKKRKLSRGSSQKTKGTSASAKARHKRRNRSSRS) is DNA-binding. The Nuclear localization signal motif lies at 316–324 (GPNKKKRKL). Residues 326–338 (RGSSQKTKGTSAS) show a composition bias toward polar residues. Positions 340–352 (KARHKRRNRSSRS) are enriched in basic residues.

This sequence belongs to the polyomaviruses capsid protein VP2 family. As to quaternary structure, forms homooligomers, and heterooligomers with VP3 in the endoplasmic reticulum membrane. Interacts (via D1 domain) with VP1. Interacts (via D1 domain) with VP1. Interacts (via C-terminus) with host SP1, this is probably also the case for VP2; this interaction represses SP1 activation of the SV40 early promoter and participates in virion assembly. Interacts (via nuclear localization signal) with host importin alpha2-beta heterodimer. In terms of assembly, oligomerizes with VP3 in the nucleus.

Its subcellular location is the virion. It localises to the host nucleus. The protein localises to the host endoplasmic reticulum. The protein resides in the host endoplasmic reticulum membrane. Functionally, structural protein that resides within the core of the capsid surrounded by 72 VP1 pentamers. Following virus endocytosis and trafficking to the endoplasmic reticulum, VP2 and VP3 form oligomers and integrate into the endoplasmic reticulum membrane. Heterooligomer VP2-VP3 may create a viroporin for transporting the viral genome across the endoplasmic reticulum membrane to the cytoplasm. Nuclear entry of the viral DNA involves the selective exposure and importin recognition of VP2 or VP3 nuclear localization signal (shared C-terminus). Plays a role in virion assembly within the nucleus in particular through a DNA-binding domain located in the C-terminal region. An N-terminal myristoylation suggests a scaffold function for virion assembly. The viral progenies exit the cells by lytic release. Isoform VP2 may repress SP1 activation of the SV40 early promoter, via specific protein-protein and protein-DNA interactions. Its function is as follows. Structural protein that resides within the core of the capsid surrounded by 72 VP1 pentamers. Following virus entry, VP2 and VP3 form oligomers and integrate into the endoplasmic reticulum membrane. Heterooligomer VP2-VP3 may create a viroporin for transporting the viral genome across the endoplasmic reticulum membrane. Essential for focus formation and virus endoplasmic reticulum-to-cytosol membrane transport, required to recruit selective cellular components to the foci in the ER membrane. Nuclear entry of the viral DNA involves the selective exposure and importin recognition of VP2 or VP3 nuclear localization signal (shared C-terminus). Isoform VP3 represses SP1 activation of the SV40 early promoter, via specific protein-protein and protein-DNA interactions. SP1 additionally participates in recruiting VP3 to the SV40 minichromosome during SV40 assembly. Plays a role in virion assembly within the nucleus. May initiate host cell lysis when associated with VP4. Viroporin inducing perforation of cellular membranes to trigger virus progeny release. Forms pores of 3 nm inner diameter. VP4 is expressed about 24 hours after the late structural proteins and is not incorporated into the mature virion. The sequence is that of Minor capsid protein VP2 from Simian virus 40 (SV40).